The following is a 203-amino-acid chain: FMN-dependent NADH:quinone oxidoreductase (203 aa).

FMN is bound at residue Ser-143–Gly-146.

It belongs to the azoreductase type 1 family. In terms of assembly, homodimer. It depends on FMN as a cofactor.

The enzyme catalyses 2 a quinone + NADH + H(+) = 2 a 1,4-benzosemiquinone + NAD(+). It carries out the reaction N,N-dimethyl-1,4-phenylenediamine + anthranilate + 2 NAD(+) = 2-(4-dimethylaminophenyl)diazenylbenzoate + 2 NADH + 2 H(+). Quinone reductase that provides resistance to thiol-specific stress caused by electrophilic quinones. In terms of biological role, also exhibits azoreductase activity. Catalyzes the reductive cleavage of the azo bond in aromatic azo compounds to the corresponding amines. This is FMN-dependent NADH:quinone oxidoreductase from Streptococcus suis (strain 98HAH33).